The chain runs to 148 residues: Macrodomain Ter protein (148 aa).

This sequence belongs to the MatP family. In terms of assembly, homodimer.

Its subcellular location is the cytoplasm. Required for spatial organization of the terminus region of the chromosome (Ter macrodomain) during the cell cycle. Prevents early segregation of duplicated Ter macrodomains during cell division. Binds specifically to matS, which is a 13 bp signature motif repeated within the Ter macrodomain. The protein is Macrodomain Ter protein of Haemophilus influenzae (strain 86-028NP).